The following is a 501-amino-acid chain: Cytochrome P450 71D6 (501 aa).

Cys-442 contacts heme.

This sequence belongs to the cytochrome P450 family. Heme serves as cofactor.

The protein is Cytochrome P450 71D6 (CYP71D6) of Solanum chacoense (Chaco potato).